The chain runs to 334 residues: Iron-uptake system permease protein FeuB (334 aa).

Helical transmembrane passes span 9 to 29, 63 to 83, 91 to 111, 119 to 139, 150 to 170, 191 to 211, 243 to 263, 281 to 301, and 305 to 325; these read IILITSPFAIALSLLLSILYG, AAGALLIGAALAVSGALMQGI, PSIMGVSDGSAFIITLCMVLL, MMIYSFIGSALGAVLVFGLAA, LAIIGTVTSMLLSSLSAAMSI, PDFLKLAAPFFLIGIIMAISL, VIILTGSAVALAGKIAFVGLV, PCSCILGGIFLTLCDLASRFI, and FETPIEVVTSIIGVPFFLYLI.

This sequence belongs to the binding-protein-dependent transport system permease family. FecCD subfamily. The complex is composed of one ATP-binding protein (YusV), two transmembrane proteins (FeuB and FeuC) and a solute-binding protein (FeuA).

The protein localises to the cell membrane. The protein resides in the membrane raft. Functionally, involved in the uptake of iron. Probably responsible for the translocation of the substrate across the membrane. Part of the ABC transporter complex FeuABC/YusV involved in import of the catecholate siderophores bacillibactin and enterobactin. This is Iron-uptake system permease protein FeuB (feuB) from Bacillus subtilis (strain 168).